Reading from the N-terminus, the 119-residue chain is Methylglyoxal synthase (119 aa).

The MGS-like domain occupies 1-119 (MKIALIAHDK…ESAKLIMADI (119 aa)). Substrate contacts are provided by residues histidine 8, lysine 12, 34–37 (TGTT), and 54–55 (SG). Aspartate 60 acts as the Proton donor/acceptor in catalysis. Substrate is bound at residue histidine 87.

Belongs to the methylglyoxal synthase family.

It carries out the reaction dihydroxyacetone phosphate = methylglyoxal + phosphate. Catalyzes the formation of methylglyoxal from dihydroxyacetone phosphate. This Clostridium perfringens (strain ATCC 13124 / DSM 756 / JCM 1290 / NCIMB 6125 / NCTC 8237 / Type A) protein is Methylglyoxal synthase.